Here is a 259-residue protein sequence, read N- to C-terminus: Probable ABC transporter permease protein RBE_1340 (259 aa).

The next 5 membrane-spanning stretches (helical) occupy residues 25 to 45 (IFSLAAITSIIRPPLYFSLII), 49 to 69 (LFIGFYSLPVVAMTTFFSGAV), 148 to 168 (VIAAIITMPCLVLIGDVIGVM), 195 to 215 (PIDVISGLVKAGVFGFIISII), and 237 to 257 (AVVNSSILILISNYLITELFF).

Belongs to the MlaE permease family.

The protein resides in the cell inner membrane. Could be part of an ABC transporter complex. The chain is Probable ABC transporter permease protein RBE_1340 from Rickettsia bellii (strain RML369-C).